Here is a 633-residue protein sequence, read N- to C-terminus: Phospholipid--sterol O-acyltransferase (633 aa).

The Cytoplasmic portion of the chain corresponds to 1 to 6; that stretch reads MGANSK. A helical; Signal-anchor for type II membrane protein transmembrane segment spans residues 7–29; the sequence is SVTASFTVIAVFFLICGGRTAVE. Residues 30-633 lie on the Lumenal side of the membrane; that stretch reads DETEFHGDYS…TSANMLLQYI (604 aa). The active-site Acyl-ester intermediate is Ser-195. Residues Asp-461 and His-505 each act as charge relay system in the active site.

This sequence belongs to the AB hydrolase superfamily. Lipase family.

The protein resides in the microsome membrane. In terms of biological role, involved in lipid catabolism. Essential for sterol esters biosynthesis in leaves and seeds, but not in flowers. Plays a role in controlling the free sterol content of leaves. Catalyzes the transacylation of acyl groups from phospholipids to a variety of different sterols. Prefers phosphatidylethanolamine over phosphatidylcholine as an acyl donor. Not active toward neutral lipids. Highly specific for position sn-2, which in plant lipids is essentially devoid of saturated acyl groups. Broad sterol specificity (cholesterol &gt; campesterol &gt; sitosterol &gt; stigmasterol), but no activity with lupeol or beta-amyrin. In Arabidopsis thaliana (Mouse-ear cress), this protein is Phospholipid--sterol O-acyltransferase (PSAT).